An 87-amino-acid chain; its full sequence is Phosphoribosyl-ATP pyrophosphatase (87 aa).

This sequence belongs to the PRA-PH family.

The protein resides in the cytoplasm. The catalysed reaction is 1-(5-phospho-beta-D-ribosyl)-ATP + H2O = 1-(5-phospho-beta-D-ribosyl)-5'-AMP + diphosphate + H(+). Its pathway is amino-acid biosynthesis; L-histidine biosynthesis; L-histidine from 5-phospho-alpha-D-ribose 1-diphosphate: step 2/9. This chain is Phosphoribosyl-ATP pyrophosphatase, found in Beutenbergia cavernae (strain ATCC BAA-8 / DSM 12333 / CCUG 43141 / JCM 11478 / NBRC 16432 / NCIMB 13614 / HKI 0122).